A 446-amino-acid polypeptide reads, in one-letter code: MKAGANTPPKVGFVSLGCPKATVDSERILTQLRAEGYLLVGDYANADVVVVNTCGFIDAAVEESLEAIGEALDENGKVVVTGCLGAREGGDFVRGAHPKVLAVTGPNQAGAVLDAIHAALPPAHDPYTDLVPPQGLRLTPPHYAYLKISEGCNQSCSFCIIPSMRGKLVSRAPDDILREAEALVAGGAKELLVISQDTGAYGVDRKYRTAFHNGRPLKTRITDLCAALGELGVWVRLHYVYPYPHIDELLPLMAEGKILPYLDVPLQHGSPRILKAMRRPAAAEKTLDRILGWRQAVPDLIIRSTFIVGFPGETDADFAELLDFLRAAELDRVGCFAYSAVEGAPANAIAGAVPEPVKEERRAAFMAVQEAISRQRLQRRVGQRQRVLVDAMARGGRVIARSASDAPEIDGVVHLGKAAGLQVGDWVEVAITRADAHDLYGMVVSA.

An MTTase N-terminal domain is found at 9–121; it reads PKVGFVSLGC…VLDAIHAALP (113 aa). Positions 18, 54, 83, 152, 156, and 159 each coordinate [4Fe-4S] cluster. Residues 138–375 enclose the Radical SAM core domain; it reads LTPPHYAYLK…MAVQEAISRQ (238 aa). Residues 378–445 enclose the TRAM domain; sequence QRRVGQRQRV…AHDLYGMVVS (68 aa).

The protein belongs to the methylthiotransferase family. RimO subfamily. Requires [4Fe-4S] cluster as cofactor.

It is found in the cytoplasm. The enzyme catalyses L-aspartate(89)-[ribosomal protein uS12]-hydrogen + (sulfur carrier)-SH + AH2 + 2 S-adenosyl-L-methionine = 3-methylsulfanyl-L-aspartate(89)-[ribosomal protein uS12]-hydrogen + (sulfur carrier)-H + 5'-deoxyadenosine + L-methionine + A + S-adenosyl-L-homocysteine + 2 H(+). Catalyzes the methylthiolation of an aspartic acid residue of ribosomal protein uS12. The sequence is that of Ribosomal protein uS12 methylthiotransferase RimO from Acidithiobacillus ferrooxidans (strain ATCC 23270 / DSM 14882 / CIP 104768 / NCIMB 8455) (Ferrobacillus ferrooxidans (strain ATCC 23270)).